Consider the following 289-residue polypeptide: Glycine--tRNA ligase alpha subunit (289 aa).

The protein belongs to the class-II aminoacyl-tRNA synthetase family. Tetramer of two alpha and two beta subunits.

Its subcellular location is the cytoplasm. The catalysed reaction is tRNA(Gly) + glycine + ATP = glycyl-tRNA(Gly) + AMP + diphosphate. The sequence is that of Glycine--tRNA ligase alpha subunit from Rickettsia bellii (strain OSU 85-389).